We begin with the raw amino-acid sequence, 671 residues long: DNA ligase (671 aa).

Residues 32-36 (DAEYD), 81-82 (SL), and glutamate 113 contribute to the NAD(+) site. Lysine 115 serves as the catalytic N6-AMP-lysine intermediate. Residues arginine 136, glutamate 173, lysine 290, and lysine 314 each coordinate NAD(+). Positions 408, 411, 426, and 432 each coordinate Zn(2+). Residues 593–671 (EIDSPFAGKT…EAEMLRLLGS (79 aa)) enclose the BRCT domain.

This sequence belongs to the NAD-dependent DNA ligase family. LigA subfamily. The cofactor is Mg(2+). Mn(2+) is required as a cofactor.

It carries out the reaction NAD(+) + (deoxyribonucleotide)n-3'-hydroxyl + 5'-phospho-(deoxyribonucleotide)m = (deoxyribonucleotide)n+m + AMP + beta-nicotinamide D-nucleotide.. Its function is as follows. DNA ligase that catalyzes the formation of phosphodiester linkages between 5'-phosphoryl and 3'-hydroxyl groups in double-stranded DNA using NAD as a coenzyme and as the energy source for the reaction. It is essential for DNA replication and repair of damaged DNA. This Shigella dysenteriae serotype 1 (strain Sd197) protein is DNA ligase.